A 119-amino-acid chain; its full sequence is Protein TusC (119 aa).

This sequence belongs to the DsrF/TusC family. As to quaternary structure, heterohexamer, formed by a dimer of trimers. The hexameric TusBCD complex contains 2 copies each of TusB, TusC and TusD. The TusBCD complex interacts with TusE.

It is found in the cytoplasm. In terms of biological role, part of a sulfur-relay system required for 2-thiolation of 5-methylaminomethyl-2-thiouridine (mnm(5)s(2)U) at tRNA wobble positions. This chain is Protein TusC, found in Escherichia coli O45:K1 (strain S88 / ExPEC).